The following is a 377-amino-acid chain: Nitric oxide reductase FlRd-NAD(+) reductase (377 aa).

It belongs to the FAD-dependent oxidoreductase family. FAD serves as cofactor.

It is found in the cytoplasm. The catalysed reaction is 2 reduced [nitric oxide reductase rubredoxin domain] + NAD(+) + H(+) = 2 oxidized [nitric oxide reductase rubredoxin domain] + NADH. Its pathway is nitrogen metabolism; nitric oxide reduction. Its function is as follows. One of at least two accessory proteins for anaerobic nitric oxide (NO) reductase. Reduces the rubredoxin moiety of NO reductase. The protein is Nitric oxide reductase FlRd-NAD(+) reductase of Shigella sonnei (strain Ss046).